The following is a 275-amino-acid chain: Probable ABC transporter permease protein NosY (275 aa).

Helical transmembrane passes span 20–40, 60–80, 111–131, 146–166, 179–199, and 250–270; these read WLLAISLLFALLSVGIAWFGA, SLATFLMPLIALLLAYDAIVG, ILALATLIGFGSAALAILALV, FMGSSLLLGCVFLALAYALSS, LGLWFFFVLLFDLALLAILVL, and ALWLALALWAGAALALAHGLF.

In terms of assembly, the complex may be composed of an ATP-binding protein (NosF), a transmembrane protein (NosY) and a solute-binding protein (NosD).

It is found in the cell inner membrane. Functionally, required for the assembly of the copper chromophores of nitrous oxide reductase. Could be part of the ABC transporter complex NosDFY. The polypeptide is Probable ABC transporter permease protein NosY (nosY) (Pseudomonas aeruginosa (strain ATCC 15692 / DSM 22644 / CIP 104116 / JCM 14847 / LMG 12228 / 1C / PRS 101 / PAO1)).